The following is a 384-amino-acid chain: tRNA-specific 2-thiouridylase MnmA (384 aa).

ATP contacts are provided by residues 9 to 16 (GMSGGVDS) and Met-35. The interaction with target base in tRNA stretch occupies residues 95 to 97 (NPD). Cys-100 acts as the Nucleophile in catalysis. Cys-100 and Cys-196 are joined by a disulfide. Residue Gly-124 participates in ATP binding. The interval 146 to 148 (KDQ) is interaction with tRNA. The Cysteine persulfide intermediate role is filled by Cys-196. The interaction with tRNA stretch occupies residues 308-309 (RY).

This sequence belongs to the MnmA/TRMU family.

The protein localises to the cytoplasm. It catalyses the reaction S-sulfanyl-L-cysteinyl-[protein] + uridine(34) in tRNA + AH2 + ATP = 2-thiouridine(34) in tRNA + L-cysteinyl-[protein] + A + AMP + diphosphate + H(+). In terms of biological role, catalyzes the 2-thiolation of uridine at the wobble position (U34) of tRNA, leading to the formation of s(2)U34. This Paraburkholderia phymatum (strain DSM 17167 / CIP 108236 / LMG 21445 / STM815) (Burkholderia phymatum) protein is tRNA-specific 2-thiouridylase MnmA.